The following is a 202-amino-acid chain: Orotate phosphoribosyltransferase (202 aa).

Residues Lys93 and 113-121 (EDIITTGGS) each bind 5-phospho-alpha-D-ribose 1-diphosphate. 2 residues coordinate orotate: Thr117 and Arg145.

The protein belongs to the purine/pyrimidine phosphoribosyltransferase family. PyrE subfamily. Homodimer. Requires Mg(2+) as cofactor.

It catalyses the reaction orotidine 5'-phosphate + diphosphate = orotate + 5-phospho-alpha-D-ribose 1-diphosphate. Its pathway is pyrimidine metabolism; UMP biosynthesis via de novo pathway; UMP from orotate: step 1/2. Its function is as follows. Catalyzes the transfer of a ribosyl phosphate group from 5-phosphoribose 1-diphosphate to orotate, leading to the formation of orotidine monophosphate (OMP). The protein is Orotate phosphoribosyltransferase of Campylobacter jejuni subsp. doylei (strain ATCC BAA-1458 / RM4099 / 269.97).